A 386-amino-acid polypeptide reads, in one-letter code: uncharacterized protein (386 aa).

Belongs to the TelA family.

This is an uncharacterized protein from Bacillus subtilis (strain 168).